The chain runs to 314 residues: Small ribosomal subunit protein RACK1 (314 aa).

The residue at position 10 (T10) is a Phosphothreonine. The stretch at 13-44 is one WD 1 repeat; it reads GHSGWVTSLSTAPENPDILLSGSRDKSIILWN. Residue S39 is modified to Phosphoserine. Residue Y52 is modified to Phosphotyrosine. WD repeat units follow at residues 61-91, 103-133, 146-178, 190-220, 231-260, and 281-311; these read GHSH…RLWD, GHTS…KIWN, GHSD…KVWD, GHTG…MLWD, EAKA…RIFD, and SSEP…RVWQ. Residue S148 is modified to Phosphoserine. A phosphoserine mark is found at S242 and S255.

Belongs to the WD repeat G protein beta family. Ribosomal protein RACK1 subfamily. Component of the small ribosomal subunit (SSU). Mature yeast ribosomes consist of a small (40S) and a large (60S) subunit. The 40S small subunit contains 1 molecule of ribosomal RNA (18S rRNA) and at least 33 different proteins. The large 60S subunit contains 3 rRNA molecules (25S, 5.8S and 5S rRNA) and at least 46 different proteins. RACK1 is located at the head of the SSU in the vicinity of the mRNA exit channel. RACK1 interacts with the mRNA-binding protein SCP16. RACK1 also exists simultaneously as a homodimer in a cytosolic non-ribosome-bound form. Interacts with pck2. Interacts with pat1/ran1.

Its subcellular location is the cytoplasm. The protein localises to the membrane. In terms of biological role, component of the ribosome, a large ribonucleoprotein complex responsible for the synthesis of proteins in the cell. The small ribosomal subunit (SSU) binds messenger RNAs (mRNAs) and translates the encoded message by selecting cognate aminoacyl-transfer RNA (tRNA) molecules. The large subunit (LSU) contains the ribosomal catalytic site termed the peptidyl transferase center (PTC), which catalyzes the formation of peptide bonds, thereby polymerizing the amino acids delivered by tRNAs into a polypeptide chain. The nascent polypeptides leave the ribosome through a tunnel in the LSU and interact with protein factors that function in enzymatic processing, targeting, and the membrane insertion of nascent chains at the exit of the ribosomal tunnel. Located at the head of the 40S ribosomal subunit in the vicinity of the mRNA exit channel, RACK1 serves as a scaffold protein that can recruit other proteins to the ribosome. Involved in induction of the ribosome quality control (RQC) pathway; a pathway that degrades nascent peptide chains during problematic translation. Involved in the negative regulation of translation of a specific subset of proteins. May be a receptor for protein kinase C in the regulation of actin cytoskeleton organization during cell wall synthesis and morphogenesis. Involved in the control of G2/M transition. May function as an anchoring protein for pat1/ran1 kinase. Negatively regulates the cell integrity transduction pathway by favoring translation of the tyrosine-phosphatases pyp1 and pyp2 that deactivate pmk1. Positively regulates the synthesis of the stress-responsive transcription factor Atf1 and the cytoplasmic catalase, a detoxificant enzyme induced by treatment with hydrogen peroxide. The sequence is that of Small ribosomal subunit protein RACK1 from Schizosaccharomyces pombe (strain 972 / ATCC 24843) (Fission yeast).